Reading from the N-terminus, the 325-residue chain is DNA-directed RNA polymerase subunit alpha (325 aa).

Positions 1-238 (MSLKSLLKGF…EHLTVFINFE (238 aa)) are alpha N-terminal domain (alpha-NTD). The segment at 255–325 (LKASLSKHVE…LGLSFGMRDF (71 aa)) is alpha C-terminal domain (alpha-CTD).

This sequence belongs to the RNA polymerase alpha chain family. Homodimer. The RNAP catalytic core consists of 2 alpha, 1 beta, 1 beta' and 1 omega subunit. When a sigma factor is associated with the core the holoenzyme is formed, which can initiate transcription.

The enzyme catalyses RNA(n) + a ribonucleoside 5'-triphosphate = RNA(n+1) + diphosphate. Functionally, DNA-dependent RNA polymerase catalyzes the transcription of DNA into RNA using the four ribonucleoside triphosphates as substrates. The sequence is that of DNA-directed RNA polymerase subunit alpha from Leptospira interrogans serogroup Icterohaemorrhagiae serovar copenhageni (strain Fiocruz L1-130).